The following is a 610-amino-acid chain: Glutamine--fructose-6-phosphate aminotransferase [isomerizing] (610 aa).

Cysteine 2 functions as the Nucleophile; for GATase activity in the catalytic mechanism. In terms of domain architecture, Glutamine amidotransferase type-2 spans 2 to 218 (CGIVGAVAQR…EGDVAEMTRR (217 aa)). SIS domains are found at residues 286–426 (AAEI…QQQR) and 459–600 (LAED…VDQP). Catalysis depends on lysine 605, which acts as the For Fru-6P isomerization activity.

In terms of assembly, homodimer.

Its subcellular location is the cytoplasm. It carries out the reaction D-fructose 6-phosphate + L-glutamine = D-glucosamine 6-phosphate + L-glutamate. In terms of biological role, catalyzes the first step in hexosamine metabolism, converting fructose-6P into glucosamine-6P using glutamine as a nitrogen source. The protein is Glutamine--fructose-6-phosphate aminotransferase [isomerizing] of Vibrio cholerae serotype O1 (strain ATCC 39315 / El Tor Inaba N16961).